The primary structure comprises 273 residues: Dermonecrotic toxin LspaSicTox-alphaIA2i (273 aa).

The active site involves His-5. 2 residues coordinate Mg(2+): Glu-25 and Asp-27. The active-site Nucleophile is His-41. 2 disulfide bridges follow: Cys-45–Cys-51 and Cys-47–Cys-190. Residue Asp-85 coordinates Mg(2+).

It belongs to the arthropod phospholipase D family. Class II subfamily. Mg(2+) serves as cofactor. In terms of tissue distribution, expressed by the venom gland.

The protein localises to the secreted. It catalyses the reaction an N-(acyl)-sphingosylphosphocholine = an N-(acyl)-sphingosyl-1,3-cyclic phosphate + choline. The catalysed reaction is an N-(acyl)-sphingosylphosphoethanolamine = an N-(acyl)-sphingosyl-1,3-cyclic phosphate + ethanolamine. The enzyme catalyses a 1-acyl-sn-glycero-3-phosphocholine = a 1-acyl-sn-glycero-2,3-cyclic phosphate + choline. It carries out the reaction a 1-acyl-sn-glycero-3-phosphoethanolamine = a 1-acyl-sn-glycero-2,3-cyclic phosphate + ethanolamine. Functionally, dermonecrotic toxins cleave the phosphodiester linkage between the phosphate and headgroup of certain phospholipids (sphingolipid and lysolipid substrates), forming an alcohol (often choline) and a cyclic phosphate. This toxin acts on sphingomyelin (SM). It may also act on ceramide phosphoethanolamine (CPE), lysophosphatidylcholine (LPC) and lysophosphatidylethanolamine (LPE), but not on lysophosphatidylserine (LPS), and lysophosphatidylglycerol (LPG). It acts by transphosphatidylation, releasing exclusively cyclic phosphate products as second products. Induces dermonecrosis, hemolysis, increased vascular permeability, edema, inflammatory response, and platelet aggregation. The protein is Dermonecrotic toxin LspaSicTox-alphaIA2i of Loxosceles spadicea (Recluse spider).